A 1102-amino-acid polypeptide reads, in one-letter code: PAN2-PAN3 deadenylation complex catalytic subunit PAN2 (1102 aa).

3 WD repeats span residues 20-59 (DYPRPATALAFDTIAELLWAGNDRGRVVSFYGRDLQRYTA), 104-144 (DEME…IVKQ), and 269-308 (NVMSFINLFEIAPSGEALAMADTECNIHLWGSPSKIHFTD). Residues 308–445 (DMAIPIEMPK…STDELESLKP (138 aa)) are linker. Positions 423-442 (AVPDPKVEQVPESSTDELES) are disordered. The 388-residue stretch at 446-833 (EAPPIYRNLE…LPAVLLFQVK (388 aa)) folds into the USP domain. Positions 881 to 1054 (VGLDTEFVSL…EDARTALKLY (174 aa)) constitute an Exonuclease domain. A divalent metal cation is bound by residues Asp884, Glu886, Asp993, and Asp1046.

The protein belongs to the peptidase C19 family. PAN2 subfamily. In terms of assembly, forms a heterotrimer with an asymmetric homodimer of the regulatory subunit PAN3 to form the poly(A)-nuclease (PAN) deadenylation complex. The cofactor is a divalent metal cation.

Its subcellular location is the cytoplasm. The enzyme catalyses Exonucleolytic cleavage of poly(A) to 5'-AMP.. With respect to regulation, positively regulated by the regulatory subunit PAN3. Its function is as follows. Catalytic subunit of the poly(A)-nuclease (PAN) deadenylation complex, one of two cytoplasmic mRNA deadenylases involved in mRNA turnover. PAN specifically shortens poly(A) tails of RNA and the activity is stimulated by poly(A)-binding protein PAB1. PAN deadenylation is followed by rapid degradation of the shortened mRNA tails by the CCR4-NOT complex. Deadenylated mRNAs are then degraded by two alternative mechanisms, namely exosome-mediated 3'-5' exonucleolytic degradation, or deadenylation-dependent mRNA decaping and subsequent 5'-3' exonucleolytic degradation by XRN1. May also be involved in post-transcriptional maturation of mRNA poly(A) tails. The protein is PAN2-PAN3 deadenylation complex catalytic subunit PAN2 of Chaetomium globosum (strain ATCC 6205 / CBS 148.51 / DSM 1962 / NBRC 6347 / NRRL 1970) (Soil fungus).